Reading from the N-terminus, the 89-residue chain is Small ribosomal subunit protein uS15 (89 aa).

It belongs to the universal ribosomal protein uS15 family. Part of the 30S ribosomal subunit. Forms a bridge to the 50S subunit in the 70S ribosome, contacting the 23S rRNA.

Its function is as follows. One of the primary rRNA binding proteins, it binds directly to 16S rRNA where it helps nucleate assembly of the platform of the 30S subunit by binding and bridging several RNA helices of the 16S rRNA. Functionally, forms an intersubunit bridge (bridge B4) with the 23S rRNA of the 50S subunit in the ribosome. In Beijerinckia indica subsp. indica (strain ATCC 9039 / DSM 1715 / NCIMB 8712), this protein is Small ribosomal subunit protein uS15.